Here is a 905-residue protein sequence, read N- to C-terminus: Protein translocase subunit SecA (905 aa).

ATP-binding positions include Gln86, 104 to 108 (GEGKT), and Asp499. Positions 890, 892, 901, and 902 each coordinate Zn(2+).

It belongs to the SecA family. In terms of assembly, monomer and homodimer. Part of the essential Sec protein translocation apparatus which comprises SecA, SecYEG and auxiliary proteins SecDF-YajC and YidC. The cofactor is Zn(2+).

The protein resides in the cell inner membrane. It is found in the cytoplasm. It catalyses the reaction ATP + H2O + cellular proteinSide 1 = ADP + phosphate + cellular proteinSide 2.. Functionally, part of the Sec protein translocase complex. Interacts with the SecYEG preprotein conducting channel. Has a central role in coupling the hydrolysis of ATP to the transfer of proteins into and across the cell membrane, serving both as a receptor for the preprotein-SecB complex and as an ATP-driven molecular motor driving the stepwise translocation of polypeptide chains across the membrane. The sequence is that of Protein translocase subunit SecA from Rickettsia typhi (strain ATCC VR-144 / Wilmington).